The following is a 602-amino-acid chain: Cholinesterase (602 aa).

The N-terminal stretch at 1 to 28 is a signal peptide; sequence MQSRSTVIYIRFVLWFLLLWVLFEKSHT. N-linked (GlcNAc...) asparagine glycans are attached at residues asparagine 85 and asparagine 134. 144-145 provides a ligand contact to substrate; that stretch reads GS. The active-site Acyl-ester intermediate is serine 226. Serine 226 is subject to Phosphoserine. N-linked (GlcNAc...) asparagine glycans are attached at residues asparagine 269 and asparagine 284. The active-site Charge relay system is glutamate 353. N-linked (GlcNAc...) asparagine glycosylation occurs at asparagine 369. Catalysis depends on histidine 466, which acts as the Charge relay system. Asparagine 483, asparagine 509, asparagine 513, and asparagine 514 each carry an N-linked (GlcNAc...) asparagine glycan.

Belongs to the type-B carboxylesterase/lipase family. As to quaternary structure, homotetramer; disulfide-linked. Dimer of dimers. Present in most cells except erythrocytes.

Its subcellular location is the secreted. The catalysed reaction is an acylcholine + H2O = a carboxylate + choline + H(+). Functionally, esterase with broad substrate specificity. Contributes to the inactivation of the neurotransmitter acetylcholine. Can degrade neurotoxic organophosphate esters. This Bos taurus (Bovine) protein is Cholinesterase (BCHE).